Here is a 626-residue protein sequence, read N- to C-terminus: Phosphomethylpyrimidine synthase (626 aa).

Residues 1-27 (MSKQEKAISLSESAQVDQQSVQPLPNS) are disordered. Polar residues predominate over residues 10–25 (LSESAQVDQQSVQPLP). Residues Asn-232, Met-261, Tyr-290, His-326, 346-348 (SRG), 387-390 (DGLR), and Glu-426 contribute to the substrate site. His-430 contacts Zn(2+). Tyr-453 contributes to the substrate binding site. His-494 lines the Zn(2+) pocket. The [4Fe-4S] cluster site is built by Cys-574, Cys-577, and Cys-582.

The protein belongs to the ThiC family. Homodimer. The cofactor is [4Fe-4S] cluster.

The enzyme catalyses 5-amino-1-(5-phospho-beta-D-ribosyl)imidazole + S-adenosyl-L-methionine = 4-amino-2-methyl-5-(phosphooxymethyl)pyrimidine + CO + 5'-deoxyadenosine + formate + L-methionine + 3 H(+). It functions in the pathway cofactor biosynthesis; thiamine diphosphate biosynthesis. Its function is as follows. Catalyzes the synthesis of the hydroxymethylpyrimidine phosphate (HMP-P) moiety of thiamine from aminoimidazole ribotide (AIR) in a radical S-adenosyl-L-methionine (SAM)-dependent reaction. The polypeptide is Phosphomethylpyrimidine synthase (Pseudomonas entomophila (strain L48)).